The sequence spans 430 residues: Enolase (430 aa).

Residue Q165 participates in (2R)-2-phosphoglycerate binding. The Proton donor role is filled by E207. D244, E287, and D314 together coordinate Mg(2+). Residues K339, R368, S369, and K390 each contribute to the (2R)-2-phosphoglycerate site. Residue K339 is the Proton acceptor of the active site.

Belongs to the enolase family. Component of the RNA degradosome, a multiprotein complex involved in RNA processing and mRNA degradation. Mg(2+) serves as cofactor.

It is found in the cytoplasm. The protein resides in the secreted. It localises to the cell surface. It catalyses the reaction (2R)-2-phosphoglycerate = phosphoenolpyruvate + H2O. It functions in the pathway carbohydrate degradation; glycolysis; pyruvate from D-glyceraldehyde 3-phosphate: step 4/5. In terms of biological role, catalyzes the reversible conversion of 2-phosphoglycerate (2-PG) into phosphoenolpyruvate (PEP). It is essential for the degradation of carbohydrates via glycolysis. This chain is Enolase, found in Xanthomonas campestris pv. campestris (strain 8004).